The primary structure comprises 145 residues: Putative pre-16S rRNA nuclease (145 aa).

It belongs to the YqgF nuclease family.

The protein localises to the cytoplasm. Its function is as follows. Could be a nuclease involved in processing of the 5'-end of pre-16S rRNA. This Thiobacillus denitrificans (strain ATCC 25259 / T1) protein is Putative pre-16S rRNA nuclease.